A 102-amino-acid polypeptide reads, in one-letter code: N(4)-acetylcytidine amidohydrolase (102 aa).

In terms of domain architecture, ASCH spans threonine 6–aspartate 92. The active-site Proton acceptor is the lysine 20. Catalysis depends on threonine 23, which acts as the Nucleophile. Catalysis depends on glutamate 73, which acts as the Proton donor.

It belongs to the N(4)-acetylcytidine amidohydrolase family.

The enzyme catalyses N(4)-acetylcytidine + H2O = cytidine + acetate + H(+). It catalyses the reaction N(4)-acetyl-2'-deoxycytidine + H2O = 2'-deoxycytidine + acetate + H(+). The catalysed reaction is N(4)-acetylcytosine + H2O = cytosine + acetate + H(+). Its function is as follows. Catalyzes the hydrolysis of N(4)-acetylcytidine (ac4C). This Yersinia pseudotuberculosis serotype O:1b (strain IP 31758) protein is N(4)-acetylcytidine amidohydrolase.